Here is a 200-residue protein sequence, read N- to C-terminus: Lipopolysaccharide core heptose(II)-phosphate phosphatase (200 aa).

Residues 1–25 (MLAFCRSSLKSKKYFIILLALAAIA) form the signal peptide.

It belongs to the phosphoglycerate mutase family. Ais subfamily.

It localises to the periplasm. Its pathway is bacterial outer membrane biogenesis; lipopolysaccharide metabolism. In terms of biological role, catalyzes the dephosphorylation of heptose(II) of the outer membrane lipopolysaccharide core. This is Lipopolysaccharide core heptose(II)-phosphate phosphatase from Escherichia coli O7:K1 (strain IAI39 / ExPEC).